The sequence spans 614 residues: Deoxynucleoside triphosphate triphosphohydrolase SAMHD1 (614 aa).

Residues 1-13 (MGSPAAGWGAAPA) show a composition bias toward low complexity. The segment at 1-33 (MGSPAAGWGAAPAKRARREGSAESSCGSPADRD) is disordered. The SAM domain occupies 37–102 (WDTERLCQHL…LACLNQLRQT (66 aa)). The GTP site is built by K107 and V108. Position 110 (N110) interacts with dGTP. The GTP site is built by D128, Q133, and R136. Residues Q140, L141, V147, and R155 each contribute to the dGTP site. A dATP-binding site is contributed by Q140. Q140 provides a ligand contact to dCTP. Residue Q140 coordinates dTTP. R155 serves as a coordination point for dATP. R155 lines the dCTP pocket. R155 provides a ligand contact to dTTP. Positions 155–307 (RFEHSLGVGY…GIDVDKWDYF (153 aa)) constitute an HD domain. 3 residues coordinate Mn(2+): H158, H197, and D198. Residues H201 and H206 each contribute to the dATP site. Residues H201 and H206 each coordinate dCTP. Positions 201 and 206 each coordinate dTTP. Residue H224 is part of the active site. D302 contributes to the Mn(2+) binding site. Residues K303, Y306, D310, R324, R343, K345, N349, R357, Y365, Q366, H367, and K368 each contribute to the dGTP site. 3 residues coordinate dATP: K303, Y306, and D310. Residues K303, Y306, and D310 each coordinate dCTP. Residues K303, Y306, and D310 each contribute to the dTTP site. R357 contacts dATP. R357 is a binding site for dCTP. Q366 lines the dATP pocket. Q366 contributes to the dCTP binding site. Position 366 (Q366) interacts with dTTP. GTP is bound by residues R442, K446, and K515. K515 lines the dGTP pocket.

Belongs to the SAMHD1 family. As to quaternary structure, homodimer; in absence of GTP and dNTP. Homotetramer; in GTP- and dNTP-bound form. Interacts with rbbp8/CtIP. Requires Zn(2+) as cofactor.

It is found in the nucleus. Its subcellular location is the chromosome. It catalyses the reaction a 2'-deoxyribonucleoside 5'-triphosphate + H2O = a 2'-deoxyribonucleoside + triphosphate + H(+). The catalysed reaction is dATP + H2O = 2'-deoxyadenosine + triphosphate + H(+). It carries out the reaction dCTP + H2O = 2'-deoxycytidine + triphosphate + H(+). The enzyme catalyses dGTP + H2O = 2'-deoxyguanosine + triphosphate + H(+). It catalyses the reaction dTTP + H2O = thymidine + triphosphate + H(+). With respect to regulation, allosterically activated and regulated via the combined actions of GTP and dNTPs (dATP, dGTP, dTTP and dCTP): Allosteric site 1 binds GTP, while allosteric site 2 binds dNTP. Allosteric activation promotes the formation of highly active homotetramers. Its function is as follows. Protein that acts both as a host restriction factor involved in defense response to virus and as a regulator of DNA end resection at stalled replication forks. Has deoxynucleoside triphosphate (dNTPase) activity, which is required to restrict infection by viruses: dNTPase activity reduces cellular dNTP levels to levels too low for retroviral reverse transcription to occur, blocking early-stage virus replication in dendritic and other myeloid cells. Functions during S phase at stalled DNA replication forks to promote the resection of gapped or reversed forks: acts by stimulating the exonuclease activity of MRE11, activating the ATR-CHK1 pathway and allowing the forks to restart replication. Its ability to promote degradation of nascent DNA at stalled replication forks is required to prevent induction of type I interferons, thereby preventing chronic inflammation. Ability to promote DNA end resection at stalled replication forks is independent of dNTPase activity. The chain is Deoxynucleoside triphosphate triphosphohydrolase SAMHD1 from Gallus gallus (Chicken).